Consider the following 756-residue polypeptide: Amine oxidase [copper-containing] 2 (756 aa).

The Cytoplasmic segment spans residues 1-4 (MHLK). A helical transmembrane segment spans residues 5–25 (IVLAFLALSLITIFALAYVLL). The Extracellular segment spans residues 26-756 (TSPGGSSQPP…DLPPFSYHGF (731 aa)). 3 N-linked (GlcNAc...) asparagine glycosylation sites follow: Asn133, Asn198, and Asn226. The Proton acceptor role is filled by Asp380. A disulfide bond links Cys398 and Cys424. The active-site Schiff-base intermediate with substrate; via topaquinone is Tyr465. 2',4',5'-topaquinone is present on Tyr465. Cu(2+) is bound by residues His516 and His518. Ca(2+)-binding residues include Asp525, Leu526, Asp527, Glu568, Glu637, Phe659, and Asn661. Asn662 carries an N-linked (GlcNAc...) asparagine glycan. Positions 663, 669, and 670 each coordinate Ca(2+). His680 is a Cu(2+) binding site. An intrachain disulfide couples Cys730 to Cys737.

The protein belongs to the copper/topaquinone oxidase family. Homodimer; disulfide-linked. Probably forms heterodimers with AOC3. Cu(2+) serves as cofactor. The cofactor is Ca(2+). It depends on L-topaquinone as a cofactor. In terms of processing, topaquinone (TPQ) is generated by copper-dependent autoxidation of a specific tyrosyl residue. In terms of tissue distribution, expressed in many tissues including adipocytes with higher expression in retina where it is active. As to expression, not expressed in testis. Not expressed in thymus.

It localises to the cell membrane. The protein localises to the cytoplasm. The enzyme catalyses 2-phenylethylamine + O2 + H2O = 2-phenylacetaldehyde + H2O2 + NH4(+). It catalyses the reaction tryptamine + O2 + H2O = indole-3-acetaldehyde + H2O2 + NH4(+). It carries out the reaction tyramine + O2 + H2O = (4-hydroxyphenyl)acetaldehyde + H2O2 + NH4(+). Catalyzes the oxidative deamination of primary amines to the corresponding aldehydes with the concomitant production of hydrogen peroxide and ammonia. Has a preference for 2-phenylethylamine, tryptamine and tyramine. Could also act on methylamine and benzylamine but much less efficiently. The protein is Amine oxidase [copper-containing] 2 of Homo sapiens (Human).